We begin with the raw amino-acid sequence, 260 residues long: MKIKDYAVDTARAVAFLSRIPMPQSLFKGYDGRLGRLVRAFPFAGIVIGFIPALALLLLLGLRADPLMAALIALSIQVLVTGALHEDGLADTADGIGGGKSREQSLLIMKDSRIGTYGAIALILSLAIRAAALAVIARHSSPLTAALAIPAVAALSRGAIAWHWQRLAPAKADGVAASTGQPDEAAMQFALASAGLVAALLIWPAFGLRPLVASLLATGIAGFAFTAFIRRKLAGHTGDTLGATQQICEIATLCALATAL.

The next 6 membrane-spanning stretches (helical) occupy residues 40–60 (AFPFAGIVIGFIPALALLLLL), 64–84 (ADPLMAALIALSIQVLVTGAL), 117–137 (YGAIALILSLAIRAAALAVIA), 142–162 (PLTAALAIPAVAALSRGAIAW), 188–208 (QFALASAGLVAALLIWPAFGL), and 209–229 (RPLVASLLATGIAGFAFTAFI).

It belongs to the CobS family. Requires Mg(2+) as cofactor.

It localises to the cell inner membrane. It catalyses the reaction alpha-ribazole + adenosylcob(III)inamide-GDP = adenosylcob(III)alamin + GMP + H(+). It carries out the reaction alpha-ribazole 5'-phosphate + adenosylcob(III)inamide-GDP = adenosylcob(III)alamin 5'-phosphate + GMP + H(+). It functions in the pathway cofactor biosynthesis; adenosylcobalamin biosynthesis; adenosylcobalamin from cob(II)yrinate a,c-diamide: step 7/7. Joins adenosylcobinamide-GDP and alpha-ribazole to generate adenosylcobalamin (Ado-cobalamin). Also synthesizes adenosylcobalamin 5'-phosphate from adenosylcobinamide-GDP and alpha-ribazole 5'-phosphate. The polypeptide is Adenosylcobinamide-GDP ribazoletransferase (Rhizobium johnstonii (strain DSM 114642 / LMG 32736 / 3841) (Rhizobium leguminosarum bv. viciae)).